The primary structure comprises 583 residues: Proteasome-associated ATPase (583 aa).

Residues 2 to 90 adopt a coiled-coil conformation; sequence ASREDRDAAN…REEVDRLAQP (89 aa). Residue 271–276 coordinates ATP; sequence GCGKTL. Positions 582-583 are docks into pockets in the proteasome alpha-ring; it reads YL.

The protein belongs to the AAA ATPase family. As to quaternary structure, homohexamer. Assembles into a hexameric ring structure that caps the 20S proteasome core. Strongly interacts with the prokaryotic ubiquitin-like protein Pup through a hydrophobic interface; the interacting region of ARC lies in its N-terminal coiled-coil domain. There is one Pup binding site per ARC hexamer ring. Upon ATP-binding, the C-terminus of ARC interacts with the alpha-rings of the proteasome core, possibly by binding to the intersubunit pockets.

The protein operates within protein degradation; proteasomal Pup-dependent pathway. Functionally, ATPase which is responsible for recognizing, binding, unfolding and translocation of pupylated proteins into the bacterial 20S proteasome core particle. May be essential for opening the gate of the 20S proteasome via an interaction with its C-terminus, thereby allowing substrate entry and access to the site of proteolysis. Thus, the C-termini of the proteasomal ATPase may function like a 'key in a lock' to induce gate opening and therefore regulate proteolysis. This Acidothermus cellulolyticus (strain ATCC 43068 / DSM 8971 / 11B) protein is Proteasome-associated ATPase.